A 49-amino-acid polypeptide reads, in one-letter code: Large ribosomal subunit protein bL33B (49 aa).

The protein belongs to the bacterial ribosomal protein bL33 family.

Functionally, plays a role in sporulation at high temperatures. The sequence is that of Large ribosomal subunit protein bL33B (rpmGB) from Bacillus subtilis (strain 168).